Here is a 311-residue protein sequence, read N- to C-terminus: Mediator of RNA polymerase II transcription subunit 27 (311 aa).

The residue at position 132 (S132) is a Phosphoserine. K134 is modified (N6-methyllysine).

Belongs to the Mediator complex subunit 27 family. As to quaternary structure, component of the Mediator complex, which is composed of MED1, MED4, MED6, MED7, MED8, MED9, MED10, MED11, MED12, MED13, MED13L, MED14, MED15, MED16, MED17, MED18, MED19, MED20, MED21, MED22, MED23, MED24, MED25, MED26, MED27, MED29, MED30, MED31, CCNC, CDK8 and CDC2L6/CDK11. The MED12, MED13, CCNC and CDK8 subunits form a distinct module termed the CDK8 module. Mediator containing the CDK8 module is less active than Mediator lacking this module in supporting transcriptional activation. Individual preparations of the Mediator complex lacking one or more distinct subunits have been variously termed ARC, CRSP, DRIP, PC2, SMCC and TRAP.

It is found in the nucleus. Component of the Mediator complex, a coactivator involved in the regulated transcription of nearly all RNA polymerase II-dependent genes. Mediator functions as a bridge to convey information from gene-specific regulatory proteins to the basal RNA polymerase II transcription machinery. Mediator is recruited to promoters by direct interactions with regulatory proteins and serves as a scaffold for the assembly of a functional preinitiation complex with RNA polymerase II and the general transcription factors. This Bos taurus (Bovine) protein is Mediator of RNA polymerase II transcription subunit 27 (MED27).